The chain runs to 146 residues: ATP synthase epsilon chain (146 aa).

It belongs to the ATPase epsilon chain family. As to quaternary structure, F-type ATPases have 2 components, CF(1) - the catalytic core - and CF(0) - the membrane proton channel. CF(1) has five subunits: alpha(3), beta(3), gamma(1), delta(1), epsilon(1). CF(0) has three main subunits: a, b and c.

It is found in the cell membrane. Produces ATP from ADP in the presence of a proton gradient across the membrane. This chain is ATP synthase epsilon chain, found in Lactobacillus helveticus (strain DPC 4571).